Reading from the N-terminus, the 175-residue chain is Dof zinc finger protein DOF1.5 (175 aa).

Residues 29 to 57 (EEQQQQQQPELQATTAVRSPSSDLTAEKR) form a disordered region. Polar residues predominate over residues 37 to 52 (PELQATTAVRSPSSDL). The segment at 62-116 (IPCPRCKSMETKFCYFNNYNVNQPRHFCKGCQRYWTAGGALRNVPVGAGRRKSKP) adopts a Dof-type zinc-finger fold. Zn(2+)-binding residues include Cys64, Cys67, Cys89, and Cys92. Residues 162-168 (PVKRLRC) carry the Nuclear localization signal motif.

The protein localises to the nucleus. Functionally, transcription factor that binds specifically to a 5'-AA[AG]G-3' consensus core sequence. Acts as a negative regulator in the phytochrome-mediated light responses. Controls phyB-mediated end-of-day response and the phyA-mediated anthocyanin accumulation. Not involved in direct flowering time regulation. The chain is Dof zinc finger protein DOF1.5 (DOF1.5) from Arabidopsis thaliana (Mouse-ear cress).